Reading from the N-terminus, the 363-residue chain is 5-formaminoimidazole-4-carboxamide-1-(beta)-D-ribofuranosyl 5'-monophosphate synthetase (363 aa).

5-amino-1-(5-phospho-beta-D-ribosyl)imidazole-4-carboxamide-binding residues include His29 and Ser96. The ATP-grasp domain maps to 118 to 350; that stretch reads RDILRWESER…MGRRVAREIR (233 aa). Residues 148-210 and Glu232 each bind ATP; that span reads PEEI…TNFC. Residue Asn260 coordinates 5-amino-1-(5-phospho-beta-D-ribosyl)imidazole-4-carboxamide. Mg(2+) contacts are provided by Gln299 and Glu312.

The protein belongs to the phosphohexose mutase family. Mg(2+) is required as a cofactor. The cofactor is Mn(2+).

The enzyme catalyses 5-amino-1-(5-phospho-beta-D-ribosyl)imidazole-4-carboxamide + formate + ATP = 5-formamido-1-(5-phospho-D-ribosyl)imidazole-4-carboxamide + ADP + phosphate. The protein operates within purine metabolism; IMP biosynthesis via de novo pathway; 5-formamido-1-(5-phospho-D-ribosyl)imidazole-4-carboxamide from 5-amino-1-(5-phospho-D-ribosyl)imidazole-4-carboxamide (formate route): step 1/1. In terms of biological role, catalyzes the ATP- and formate-dependent formylation of 5-aminoimidazole-4-carboxamide-1-beta-d-ribofuranosyl 5'-monophosphate (AICAR) to 5-formaminoimidazole-4-carboxamide-1-beta-d-ribofuranosyl 5'-monophosphate (FAICAR) in the absence of folates. This chain is 5-formaminoimidazole-4-carboxamide-1-(beta)-D-ribofuranosyl 5'-monophosphate synthetase, found in Methanothermobacter thermautotrophicus (strain ATCC 29096 / DSM 1053 / JCM 10044 / NBRC 100330 / Delta H) (Methanobacterium thermoautotrophicum).